A 972-amino-acid polypeptide reads, in one-letter code: Hyaluronan synthase (972 aa).

Positions Lys152–Phe325 are A1. An A2 region spans residues Glu432–Phe604.

It belongs to the glycosyltransferase 2 family. CS/HAS subfamily. Requires Mg(2+) as cofactor. Co(2+) serves as cofactor.

The protein resides in the cell membrane. The enzyme catalyses [hyaluronan](n) + UDP-N-acetyl-alpha-D-glucosamine = N-acetyl-beta-D-glucosaminyl-(1-&gt;4)-[hyaluronan](n) + UDP + H(+). It carries out the reaction N-acetyl-beta-D-glucosaminyl-(1-&gt;4)-[hyaluronan](n) + UDP-alpha-D-glucuronate = [hyaluronan](n+1) + UDP + H(+). It catalyses the reaction 3-O-(beta-D-GalNAc-(1-&gt;4)-beta-D-GlcA-(1-&gt;3)-beta-D-Gal-(1-&gt;3)-beta-D-Gal-(1-&gt;4)-beta-D-Xyl)-L-seryl-[protein] + UDP-alpha-D-glucuronate = 3-O-(beta-D-GlcA-(1-&gt;3)-beta-D-GalNAc-(1-&gt;4)-beta-D-GlcA-(1-&gt;3)-beta-D-Gal-(1-&gt;3)-beta-D-Gal-(1-&gt;4)-beta-D-Xyl)-L-seryl-[protein] + UDP + H(+). The catalysed reaction is 3-O-{[beta-D-GalNAc-(1-&gt;4)-beta-D-GlcA-(1-&gt;3)](n)-beta-D-GalNAc-(1-&gt;4)-beta-D-GlcA-(1-&gt;3)-beta-D-Gal-(1-&gt;3)-beta-D-Gal-(1-&gt;4)-beta-D-Xyl}-L-seryl-[protein] + UDP-alpha-D-glucuronate = 3-O-{beta-D-GlcA-(1-&gt;3)-[beta-D-GalNAc-(1-&gt;4)-beta-D-GlcA-(1-&gt;3)](n)-beta-D-GalNAc-(1-&gt;4)-beta-D-GlcA-(1-&gt;3)-beta-D-Gal-(1-&gt;3)-beta-D-Gal-(1-&gt;4)-beta-D-Xyl}-L-seryl-[protein] + UDP + H(+). Its function is as follows. Catalyzes the polymerization of hyaluronan, a polysaccharide composed of a repeating disaccharide of N-acetylglucosamine (GlcNAc) and glucuronic acid (GlcUA) units. Each unit has the composition in beta-(1-&gt;4)-GlcUA-beta-(1-&gt;3)-GlcNAc. The chain is Hyaluronan synthase (hyaD) from Pasteurella multocida.